Consider the following 286-residue polypeptide: Dioxygenase trt7 (286 aa).

Residues His-129, Asp-131, and His-206 each contribute to the Fe cation site.

It belongs to the PhyH family. Homodimer. The cofactor is Fe cation.

Its pathway is secondary metabolite biosynthesis; terpenoid biosynthesis. Functionally, dioxygenase; part of the gene cluster that mediates the biosynthesis of terretonin, a fungal meroterpenoid that acts as a mycotoxin. The first step of the pathway is the synthesis of 3,5-dimethylorsellinic acid (DMOA) by the polyketide synthase trt4. DMOA is then prenylated into farnesyl-DMOA by the polyprenyl transferase trt2. Methylation by the methyltransferase trt5 then leads to farnesyl-DMOA methyl ester which is further subject to epoxidation by the FAD-dependent monooxygenase trt8 to yield epoxyfarnesyl-DMOA methyl ester. Cyclization of epoxyfarnesyl-DMOA methyl ester by the terpene cyclase trt1 leads to a tetracycle intermediate which is in turn converted to preterretonin. Dehydrogenase trt9 comes next to transform preterretonin to preterrenoid. The FAD-dependent monooxygenase trt3 is then required for the C-hydroxylation at C16 of preterrenoid to yield terrenoid. The cytochrome P450 trt6 catalyzes three successive oxidations to transform terrenoid into an unstable intermediate, which then undergoes the D-ring expansion and unusual rearrangement of the methoxy group to afford the core skeleton of terretonin. Trt14 catalyzes the D-ring expansion of terretonin involving intramolecular methoxy rearrangement as well as the hydrolysis of the expanded D-ring and the methyl ester moiety. Finally, the nonheme iron-dependent dioxygenase trt7 accomplishes the last two oxidation reactions steps to complete the biosynthesis of terretonin. Terretonin C is produced via spontaneous decarboxylation of the terretonin precursor. Another shunt product of the terretonin biosynthesis is dihydrofarnesyl-DMOA, derived from epoxyfarnesyl-DMOA through hydrolysis of the epoxide. The polypeptide is Dioxygenase trt7 (Aspergillus terreus (strain NIH 2624 / FGSC A1156)).